Consider the following 428-residue polypeptide: Glutamyl-tRNA reductase (428 aa).

Substrate is bound by residues 55 to 58, S114, 119 to 121, and Q125; these read TCNR and ETQ. The Nucleophile role is filled by C56. NADP(+) is bound at residue 194–199; that stretch reads GAGEMI.

This sequence belongs to the glutamyl-tRNA reductase family. Homodimer.

The catalysed reaction is (S)-4-amino-5-oxopentanoate + tRNA(Glu) + NADP(+) = L-glutamyl-tRNA(Glu) + NADPH + H(+). It participates in porphyrin-containing compound metabolism; protoporphyrin-IX biosynthesis; 5-aminolevulinate from L-glutamyl-tRNA(Glu): step 1/2. Its function is as follows. Catalyzes the NADPH-dependent reduction of glutamyl-tRNA(Glu) to glutamate 1-semialdehyde (GSA). This Paraburkholderia phytofirmans (strain DSM 17436 / LMG 22146 / PsJN) (Burkholderia phytofirmans) protein is Glutamyl-tRNA reductase.